Consider the following 623-residue polypeptide: AFI1-like protein C776.06c (623 aa).

A uDENN domain is found at 5-204 (DYLLTAIFDP…IDNIPKPGSE (200 aa)). Residues 248–386 (ISNLINTFID…SDATTTMDTK (139 aa)) enclose the cDENN domain. The region spanning 388 to 476 (LFNNTSPFTP…WSWDNDDEKV (89 aa)) is the dDENN domain.

The protein belongs to the AFI1/mesA family.

It localises to the cytoplasm. It is found in the cell cortex. Its subcellular location is the nucleus. Involved in polarity establishment. The chain is AFI1-like protein C776.06c from Schizosaccharomyces pombe (strain 972 / ATCC 24843) (Fission yeast).